We begin with the raw amino-acid sequence, 112 residues long: uncharacterized protein (112 aa).

The transit peptide at 1-21 (MYLSAQLMRTVTASHLTLRAL) directs the protein to the mitochondrion.

The protein resides in the mitochondrion. This is an uncharacterized protein from Saccharomyces cerevisiae (strain ATCC 204508 / S288c) (Baker's yeast).